The chain runs to 146 residues: Mitochondrial pyruvate carrier 3 (146 aa).

A mitochondrion-targeting transit peptide spans 1 to 20; it reads MSASAFNFAFRRFWNSETGP. 3 helical membrane-spanning segments follow: residues 23–39, 55–71, and 78–94; these read VHFW…FAGL, LSLL…SFVI, and LASV…YHLT.

It belongs to the mitochondrial pyruvate carrier (MPC) (TC 2.A.105) family. As to quaternary structure, the functional 150 kDa pyruvate import complex is a heteromer of MPC1 and either MPC2 or MPC3.

It is found in the mitochondrion. Its subcellular location is the mitochondrion inner membrane. Its function is as follows. Mediates the uptake of pyruvate into mitochondria. The sequence is that of Mitochondrial pyruvate carrier 3 from Saccharomyces cerevisiae (strain ATCC 204508 / S288c) (Baker's yeast).